Consider the following 312-residue polypeptide: Olfactory receptor 2L13 (312 aa).

At 1–24 (MEKWNHTSNDFILLGLLPPNQTGI) the chain is on the extracellular side. Asparagine 5 and asparagine 20 each carry an N-linked (GlcNAc...) asparagine glycan. A helical transmembrane segment spans residues 25–48 (FLLCLIILIFFLASVGNSAMIHLI). The Cytoplasmic portion of the chain corresponds to 49-56 (HVDPRLHT). The chain crosses the membrane as a helical span at residues 57 to 78 (PMYFLLSQLSLMDLMYISTTVP). Topologically, residues 79–99 (KMAYNFLSGQKGISFLGCGVQ) are extracellular. Cysteine 96 and cysteine 188 form a disulfide bridge. Residues 100 to 119 (SFFFLTMACSEGLLLTSMAY) traverse the membrane as a helical segment. At 120–138 (DRYLAICHSLYYPIRMSKM) the chain is on the cytoplasmic side. A helical transmembrane segment spans residues 139 to 157 (MCVKMIGGSWTLGSINSLA). Over 158-194 (HTVFALHIPYCRSRAIDHFFCDVPAMLLLACTDTWVY) the chain is Extracellular. A helical transmembrane segment spans residues 195–218 (EYMVFVSTSLFLLFPFIGITSSCG). At 219 to 235 (RVLFAVYHMHSKEGRKK) the chain is on the cytoplasmic side. A helical transmembrane segment spans residues 236–258 (AFTTISTHLTVVIFYYAPFVYTY). The Extracellular segment spans residues 259–271 (LRPRNLRSPAEDK). Residues 272-291 (ILAVFYTILTPMLNPIIYSL) traverse the membrane as a helical segment. Residues 292–312 (RNKEVLGAMRRVFGIFSFLKE) are Cytoplasmic-facing.

This sequence belongs to the G-protein coupled receptor 1 family.

The protein localises to the cell membrane. Odorant receptor. The sequence is that of Olfactory receptor 2L13 (OR2L13) from Homo sapiens (Human).